A 264-amino-acid chain; its full sequence is Phosphonoacetaldehyde hydrolase (264 aa).

Residue Asp9 is the Nucleophile of the active site. Mg(2+)-binding residues include Asp9 and Ala11. The active-site Schiff-base intermediate with substrate is the Lys50. A Mg(2+)-binding site is contributed by Asp183.

Belongs to the HAD-like hydrolase superfamily. PhnX family. In terms of assembly, homodimer. The cofactor is Mg(2+).

It catalyses the reaction phosphonoacetaldehyde + H2O = acetaldehyde + phosphate + H(+). Involved in phosphonate degradation. This chain is Phosphonoacetaldehyde hydrolase, found in Bacillus thuringiensis (strain Al Hakam).